The sequence spans 195 residues: MAFVLSLLMALVLASYSPGGSLGCDLSQNHVLLGRQNLKLLGQMTRLSPRFCLQDRKDFGLPQEMVEGGQLQKDQAISVLHEMLQQCFNLFHTERSSAAWDTTLLEQLRTGLHQQLDDLDACLGQVMGKEDSDLRRMGPTLTVKKYFQGIHVYLQEKEYSDCAWEIVQVEMMRALSSISRLQKRLRKMGGDLNSP.

Residues 1–23 form the signal peptide; it reads MAFVLSLLMALVLASYSPGGSLG. Cystine bridges form between C24-C122 and C52-C162.

Belongs to the alpha/beta interferon family. IFN-alphaII subfamily. In terms of tissue distribution, constitutively and exclusively expressed in the mononuclear cells of the extraembryonic trophectoderm.

The protein localises to the secreted. Its function is as follows. Paracrine hormone primarily responsible for maternal recognition of pregnancy. Interacts with endometrial receptors, probably type I interferon receptors, and blocks estrogen receptor expression, preventing the estrogen-induced increase in oxytocin receptor expression in the endometrium. This results in the suppression of the pulsatile endometrial release of the luteolytic hormone prostaglandin F2-alpha, hindering the regression of the corpus luteum (luteolysis) and therefore a return to ovarian cyclicity. This, and a possible direct effect of IFN-tau on prostaglandin synthesis, leads in turn to continued ovarian progesterone secretion, which stimulates the secretion by the endometrium of the nutrients required for the growth of the conceptus. In summary, displays particularly high antiviral and antiproliferative potency concurrently with particular weak cytotoxicity, high antiluteolytic activity and immunomodulatory properties. In contrast with other IFNs, IFN-tau is not virally inducible. The sequence is that of Interferon tau (IFNT) from Cervus elaphus (Red deer).